The primary structure comprises 911 residues: DNA mismatch repair protein MutS (911 aa).

A disordered region spans residues 1–95 (MALQGNLFGD…PWSHHSQVTP (95 aa)). Residues 23 to 42 (KRQDEPDQLDDHELTQDAKQ) show a composition bias toward basic and acidic residues. 727-734 (GPNASGKS) provides a ligand contact to ATP.

This sequence belongs to the DNA mismatch repair MutS family.

In terms of biological role, this protein is involved in the repair of mismatches in DNA. It is possible that it carries out the mismatch recognition step. This protein has a weak ATPase activity. This is DNA mismatch repair protein MutS from Synechococcus sp. (strain CC9311).